The primary structure comprises 271 residues: Type III pantothenate kinase (271 aa).

ATP is bound at residue 6–13 (DVRNTHTV). 109–112 (GADR) is a binding site for substrate. Catalysis depends on D111, which acts as the Proton acceptor. Position 131 (D131) interacts with K(+). S134 serves as a coordination point for ATP. T186 contributes to the substrate binding site.

Belongs to the type III pantothenate kinase family. As to quaternary structure, homodimer. It depends on NH4(+) as a cofactor. K(+) serves as cofactor.

It localises to the cytoplasm. The catalysed reaction is (R)-pantothenate + ATP = (R)-4'-phosphopantothenate + ADP + H(+). Its pathway is cofactor biosynthesis; coenzyme A biosynthesis; CoA from (R)-pantothenate: step 1/5. Functionally, catalyzes the phosphorylation of pantothenate (Pan), the first step in CoA biosynthesis. The protein is Type III pantothenate kinase of Mycobacteroides abscessus (strain ATCC 19977 / DSM 44196 / CCUG 20993 / CIP 104536 / JCM 13569 / NCTC 13031 / TMC 1543 / L948) (Mycobacterium abscessus).